A 203-amino-acid chain; its full sequence is Monothiol glutaredoxin-7 (203 aa).

A signal peptide spans 1–32; it reads MAIVINKRNVRVLVITNLLLIVVFFVLRNSNA. In terms of domain architecture, Glutaredoxin spans 88-191; it reads AAEYNKIMEQ…DSFKKWSDGA (104 aa). A [2Fe-2S] cluster-binding site is contributed by cysteine 108.

It belongs to the glutaredoxin family. Monothiol subfamily.

This is Monothiol glutaredoxin-7 (GRX7) from Saccharomyces cerevisiae (strain ATCC 204508 / S288c) (Baker's yeast).